A 210-amino-acid polypeptide reads, in one-letter code: Histidine biosynthesis bifunctional protein HisIE (210 aa).

Residues 1–106 form a phosphoribosyl-AMP cyclohydrolase region; sequence MTKYKIDFSK…SCFNTEVPFS (106 aa). The tract at residues 107–210 is phosphoribosyl-ATP pyrophosphohydrolase; that stretch reads VQTLAQTVQD…KGERQNIEQW (104 aa).

In the N-terminal section; belongs to the PRA-CH family. The protein in the C-terminal section; belongs to the PRA-PH family.

The protein localises to the cytoplasm. It carries out the reaction 1-(5-phospho-beta-D-ribosyl)-ATP + H2O = 1-(5-phospho-beta-D-ribosyl)-5'-AMP + diphosphate + H(+). The enzyme catalyses 1-(5-phospho-beta-D-ribosyl)-5'-AMP + H2O = 1-(5-phospho-beta-D-ribosyl)-5-[(5-phospho-beta-D-ribosylamino)methylideneamino]imidazole-4-carboxamide. It functions in the pathway amino-acid biosynthesis; L-histidine biosynthesis; L-histidine from 5-phospho-alpha-D-ribose 1-diphosphate: step 2/9. It participates in amino-acid biosynthesis; L-histidine biosynthesis; L-histidine from 5-phospho-alpha-D-ribose 1-diphosphate: step 3/9. This chain is Histidine biosynthesis bifunctional protein HisIE (hisI), found in Staphylococcus aureus (strain Mu50 / ATCC 700699).